A 92-amino-acid chain; its full sequence is cAMP-dependent protein kinase inhibitor beta (92 aa).

The tract at residues 1–26 is disordered; sequence MGGGTSPEAQQDSVMRTDSSEMTDVE. Positions 7 to 26 are enriched in polar residues; sequence PEAQQDSVMRTDSSEMTDVE. S56 is subject to Phosphoserine. Residues 70 to 82 show a composition bias toward basic and acidic residues; that stretch reads EDAKTKNEEKDQG. The segment at 70–92 is disordered; it reads EDAKTKNEEKDQGQPKTPLNEGK.

This sequence belongs to the PKI family.

Its function is as follows. Extremely potent competitive inhibitor of cAMP-dependent protein kinase activity, this protein interacts with the catalytic subunit of the enzyme after the cAMP-induced dissociation of its regulatory chains. This Mus musculus (Mouse) protein is cAMP-dependent protein kinase inhibitor beta (Pkib).